The chain runs to 133 residues: UPF0292 protein TON_0187 (133 aa).

Residues 20–100 (EGAIIVEGPR…RVDSETRKEL (81 aa)) form the Toprim domain. The Mg(2+) site is built by Glu-26, Asp-69, and Asp-71.

Belongs to the UPF0292 family. It depends on Mg(2+) as a cofactor.

The polypeptide is UPF0292 protein TON_0187 (Thermococcus onnurineus (strain NA1)).